We begin with the raw amino-acid sequence, 471 residues long: ATP synthase subunit beta (471 aa).

Residue 152–159 (GGAGVGKT) participates in ATP binding.

It belongs to the ATPase alpha/beta chains family. As to quaternary structure, F-type ATPases have 2 components, CF(1) - the catalytic core - and CF(0) - the membrane proton channel. CF(1) has five subunits: alpha(3), beta(3), gamma(1), delta(1), epsilon(1). CF(0) has three main subunits: a(1), b(2) and c(9-12). The alpha and beta chains form an alternating ring which encloses part of the gamma chain. CF(1) is attached to CF(0) by a central stalk formed by the gamma and epsilon chains, while a peripheral stalk is formed by the delta and b chains.

Its subcellular location is the cell membrane. It carries out the reaction ATP + H2O + 4 H(+)(in) = ADP + phosphate + 5 H(+)(out). In terms of biological role, produces ATP from ADP in the presence of a proton gradient across the membrane. The catalytic sites are hosted primarily by the beta subunits. In Herpetosiphon aurantiacus (Herpetosiphon giganteus), this protein is ATP synthase subunit beta.